The sequence spans 382 residues: uncharacterized protein (382 aa).

Transmembrane regions (helical) follow at residues 14–34 (GLLLLTLAIAVLNTLVPLWLA), 45–65 (VVSSSYFTGNLVGTLLTGYVI), 75–95 (YLASFIFAAGCAGLGLMIGFW), 102–122 (FVAGVGCAMIWVVVESALMCS), 131–151 (LLAAYMMVYYVGTFLGQLLVS), 157–177 (LMSVLPWVTGLTLAGILPLLF), 206–226 (VNGCIISGIVLGSLYGLMPLF), 235–255 (ASIGFWMAVLVSAGILGQWPI), 270–290 (VQVFVVILGSIAMLSQAAMAP), 291–311 (ALFILGAAGFTLYPVAMAWAC), 325–345 (ALLLSYTVGSLLGPSFTAMLM), and 348–368 (FSDNLLFIMIASVSFIYLLML).

Belongs to the major facilitator superfamily. YcaD (TC 2.A.1.26) family.

It is found in the cell inner membrane. This is an uncharacterized protein from Escherichia coli O17:K52:H18 (strain UMN026 / ExPEC).